The following is a 1026-amino-acid chain: Multidrug resistance protein MdtC (1026 aa).

11 helical membrane passes run 12–32 (VATTLLTLAIAISGVISFSLL), 333–353 (EVEQSLVIAIGLVILVVFIFL), 360–380 (LIPAVAVPVSLIGSFTAMYLC), 387–407 (LSLMALTIATGFVVDDAIVVL), 431–451 (VGFTVLSMSVSLVAVFIPLLL), 463–483 (FAVTLSVSIGLSLIISLTLTP), 528–548 (WVLAVFLATIALNVWLYVSIP), 853–873 (LLLIAAAIATVYIVLGILYES), 897–917 (LFGAPFSLIALIGIMLLIGIV), 953–973 (PIMMTTLAALFGALPLVLTHG), and 984–1004 (ITIVGGLIVSQLLTLYTTPVV).

This sequence belongs to the resistance-nodulation-cell division (RND) (TC 2.A.6) family. MdtC subfamily. Part of a tripartite efflux system composed of MdtA, MdtB and MdtC. MdtC forms a heteromultimer with MdtB.

The protein localises to the cell inner membrane. The sequence is that of Multidrug resistance protein MdtC from Serratia proteamaculans (strain 568).